Here is a 501-residue protein sequence, read N- to C-terminus: Zinc-binding lipoprotein AdcA (501 aa).

Residues 1–18 (MKKISLLLASLCALFLVA) form the signal peptide. Cys-19 carries the N-palmitoyl cysteine lipid modification. Cys-19 is lipidated: S-diacylglycerol cysteine. Residue His-63 coordinates Zn(2+). The interval 116–136 (LPGGEEEEGDHDHGEEGHHHE) is disordered. Residues 120–136 (EEEEGDHDHGEEGHHHE) are his-rich loop. The span at 125 to 136 (DHDHGEEGHHHE) shows a compositional bias: basic and acidic residues. Positions 140, 204, and 279 each coordinate Zn(2+).

Belongs to the bacterial solute-binding protein 9 family.

It localises to the cell membrane. In terms of biological role, part of the ATP-binding cassette (ABC) transport system AdcABC involved in zinc import. Binds zinc with high affinity and specificity and delivers it to the membrane permease for translocation into the cytoplasm. The polypeptide is Zinc-binding lipoprotein AdcA (adcA) (Streptococcus pneumoniae serotype 4 (strain ATCC BAA-334 / TIGR4)).